Consider the following 89-residue polypeptide: MSEDTRNSRKVIQGRVVSDKMDKTIVVIVETYKNHPVYGKRVRYSKKFKAHDEKNEAKTGDIVKIMETRPLSATKRFRLIEVVQKAVII.

The protein belongs to the universal ribosomal protein uS17 family. As to quaternary structure, part of the 30S ribosomal subunit.

In terms of biological role, one of the primary rRNA binding proteins, it binds specifically to the 5'-end of 16S ribosomal RNA. This Lactiplantibacillus plantarum (strain ATCC BAA-793 / NCIMB 8826 / WCFS1) (Lactobacillus plantarum) protein is Small ribosomal subunit protein uS17.